Reading from the N-terminus, the 184-residue chain is ATP synthase subunit delta (184 aa).

This sequence belongs to the ATPase delta chain family. F-type ATPases have 2 components, F(1) - the catalytic core - and F(0) - the membrane proton channel. F(1) has five subunits: alpha(3), beta(3), gamma(1), delta(1), epsilon(1). F(0) has three main subunits: a(1), b(2) and c(10-14). The alpha and beta chains form an alternating ring which encloses part of the gamma chain. F(1) is attached to F(0) by a central stalk formed by the gamma and epsilon chains, while a peripheral stalk is formed by the delta and b chains.

The protein resides in the cell inner membrane. Its function is as follows. F(1)F(0) ATP synthase produces ATP from ADP in the presence of a proton or sodium gradient. F-type ATPases consist of two structural domains, F(1) containing the extramembraneous catalytic core and F(0) containing the membrane proton channel, linked together by a central stalk and a peripheral stalk. During catalysis, ATP synthesis in the catalytic domain of F(1) is coupled via a rotary mechanism of the central stalk subunits to proton translocation. In terms of biological role, this protein is part of the stalk that links CF(0) to CF(1). It either transmits conformational changes from CF(0) to CF(1) or is implicated in proton conduction. This is ATP synthase subunit delta from Magnetococcus marinus (strain ATCC BAA-1437 / JCM 17883 / MC-1).